A 585-amino-acid chain; its full sequence is Proline--tRNA ligase (585 aa).

It belongs to the class-II aminoacyl-tRNA synthetase family. ProS type 1 subfamily. As to quaternary structure, homodimer.

It is found in the cytoplasm. It catalyses the reaction tRNA(Pro) + L-proline + ATP = L-prolyl-tRNA(Pro) + AMP + diphosphate. Functionally, catalyzes the attachment of proline to tRNA(Pro) in a two-step reaction: proline is first activated by ATP to form Pro-AMP and then transferred to the acceptor end of tRNA(Pro). As ProRS can inadvertently accommodate and process non-cognate amino acids such as alanine and cysteine, to avoid such errors it has two additional distinct editing activities against alanine. One activity is designated as 'pretransfer' editing and involves the tRNA(Pro)-independent hydrolysis of activated Ala-AMP. The other activity is designated 'posttransfer' editing and involves deacylation of mischarged Ala-tRNA(Pro). The misacylated Cys-tRNA(Pro) is not edited by ProRS. This chain is Proline--tRNA ligase, found in Acidobacterium capsulatum (strain ATCC 51196 / DSM 11244 / BCRC 80197 / JCM 7670 / NBRC 15755 / NCIMB 13165 / 161).